The following is a 304-amino-acid chain: Ribonuclease Z (304 aa).

Zn(2+) is bound by residues His-63, His-65, Asp-67, His-68, His-143, Asp-213, and His-271. Catalysis depends on Asp-67, which acts as the Proton acceptor.

This sequence belongs to the RNase Z family. Homodimer. The cofactor is Zn(2+).

It catalyses the reaction Endonucleolytic cleavage of RNA, removing extra 3' nucleotides from tRNA precursor, generating 3' termini of tRNAs. A 3'-hydroxy group is left at the tRNA terminus and a 5'-phosphoryl group is left at the trailer molecule.. Functionally, zinc phosphodiesterase, which displays some tRNA 3'-processing endonuclease activity. Probably involved in tRNA maturation, by removing a 3'-trailer from precursor tRNA. The polypeptide is Ribonuclease Z (Porphyromonas gingivalis (strain ATCC 33277 / DSM 20709 / CIP 103683 / JCM 12257 / NCTC 11834 / 2561)).